We begin with the raw amino-acid sequence, 814 residues long: Cellulase/esterase CelE (814 aa).

The first 34 residues, 1–34, serve as a signal peptide directing secretion; the sequence is MKKIVSLVCVLVMLVSILGSFSVVAASPVKGFQV. Residues 35 to 354 are cellulase; that stretch reads SGTKLLDASG…AVFWWDNGYY (320 aa). The active-site Proton donor; for cellulase activity is Glu-193. Catalysis depends on Glu-316, which acts as the Nucleophile; for cellulase activity. In terms of domain architecture, Dockerin spans 409–479; that stretch reads ANILYGDVNG…LLRSIDKFPA (71 aa). Asp-415, Asn-417, Asp-419, Gly-420, Lys-421, Asp-426, Asp-451, Val-452, Asn-453, Asp-455, Lys-457, and Asp-462 together coordinate Ca(2+). The interval 490 to 814 is esterase; sequence PGILYNGRFD…TAEIKNKLGW (325 aa). Catalysis depends on Ser-612, which acts as the Nucleophile; for esterase activity.

The protein in the N-terminal section; belongs to the glycosyl hydrolase 5 (cellulase A) family. This sequence in the C-terminal section; belongs to the carbohydrate esterase 2 (CE2) family.

It is found in the secreted. The catalysed reaction is Endohydrolysis of (1-&gt;4)-beta-D-glucosidic linkages in cellulose, lichenin and cereal beta-D-glucans.. It carries out the reaction Deacetylation of xylans and xylo-oligosaccharides.. The protein operates within glycan metabolism; cellulose degradation. It participates in glycan degradation; xylan degradation. With respect to regulation, esterase activity of the CE2 module is inhibited when this domain binds to cellohexaose or beta-glucan. Its function is as follows. Multifunctional enzyme involved in the degradation of plant cell wall polysaccharides. Displays endoglucanase activity against carboxymethyl cellulose (CMC) and barley beta-glucan. Also catalyzes the deacetylation of acetylated birchwood xylan and glucomannan, with a preference for the latter, and of the synthetic substrate 4-nitrophenyl acetate (4-NPAc). The protein is Cellulase/esterase CelE of Acetivibrio thermocellus (strain ATCC 27405 / DSM 1237 / JCM 9322 / NBRC 103400 / NCIMB 10682 / NRRL B-4536 / VPI 7372) (Clostridium thermocellum).